A 273-amino-acid polypeptide reads, in one-letter code: Dermonecrotic toxin LdSicTox-alphaIB1bii (273 aa).

H5 is a catalytic residue. Residues E25 and D27 each coordinate Mg(2+). H41 serves as the catalytic Nucleophile. 2 disulfides stabilise this stretch: C45-C51 and C47-C190. D85 lines the Mg(2+) pocket. The N-linked (GlcNAc...) asparagine glycan is linked to N250.

Belongs to the arthropod phospholipase D family. Class II subfamily. The cofactor is Mg(2+). In terms of tissue distribution, expressed by the venom gland.

The protein resides in the secreted. It carries out the reaction an N-(acyl)-sphingosylphosphocholine = an N-(acyl)-sphingosyl-1,3-cyclic phosphate + choline. The catalysed reaction is an N-(acyl)-sphingosylphosphoethanolamine = an N-(acyl)-sphingosyl-1,3-cyclic phosphate + ethanolamine. It catalyses the reaction a 1-acyl-sn-glycero-3-phosphocholine = a 1-acyl-sn-glycero-2,3-cyclic phosphate + choline. The enzyme catalyses a 1-acyl-sn-glycero-3-phosphoethanolamine = a 1-acyl-sn-glycero-2,3-cyclic phosphate + ethanolamine. Functionally, dermonecrotic toxins cleave the phosphodiester linkage between the phosphate and headgroup of certain phospholipids (sphingolipid and lysolipid substrates), forming an alcohol (often choline) and a cyclic phosphate. This toxin acts on sphingomyelin (SM). It may also act on ceramide phosphoethanolamine (CPE), lysophosphatidylcholine (LPC) and lysophosphatidylethanolamine (LPE), but not on lysophosphatidylserine (LPS), and lysophosphatidylglycerol (LPG). It acts by transphosphatidylation, releasing exclusively cyclic phosphate products as second products. Induces dermonecrosis, hemolysis, increased vascular permeability, edema, inflammatory response, and platelet aggregation. The polypeptide is Dermonecrotic toxin LdSicTox-alphaIB1bii (Loxosceles deserta (Desert recluse spider)).